A 483-amino-acid polypeptide reads, in one-letter code: Bromoperoxidase-catalase (483 aa).

The tract at residues 1–24 (MTQGPLTTEAGAPVADNQNSETAG) is disordered. Active-site residues include H54 and N127. Heme is bound at residue Y337.

It belongs to the catalase family.

The enzyme catalyses 2 H2O2 = O2 + 2 H2O. The polypeptide is Bromoperoxidase-catalase (bca) (Streptomyces venezuelae (strain ATCC 10712 / CBS 650.69 / DSM 40230 / JCM 4526 / NBRC 13096 / PD 04745)).